We begin with the raw amino-acid sequence, 148 residues long: MALPKRIIKEIETLTRDPPPGIVAAPTEDNLRYFKITMEGPQQSAYEGGKFHLELFLPDEYPMMPPNVRFLTKIYHPNVDKLGRICLSTLKKDWSPALQIRTVLLSIQALMGAPNPDDPLDNDVAKIWKENEPQAIANAREWTKKYAV.

Residues 2–148 (ALPKRIIKEI…AREWTKKYAV (147 aa)) form the UBC core domain. The Glycyl thioester intermediate role is filled by Cys-86.

This sequence belongs to the ubiquitin-conjugating enzyme family. Heterodimer with spm2.

It catalyses the reaction S-ubiquitinyl-[E1 ubiquitin-activating enzyme]-L-cysteine + [E2 ubiquitin-conjugating enzyme]-L-cysteine = [E1 ubiquitin-activating enzyme]-L-cysteine + S-ubiquitinyl-[E2 ubiquitin-conjugating enzyme]-L-cysteine.. Its pathway is protein modification; protein ubiquitination. In terms of biological role, has a role in the DNA error-free postreplication repair (PRR) pathway. The ubc13/spm2 heterodimer catalyzes the synthesis of non-canonical poly-ubiquitin chains that are linked through 'Lys-63'. The protein is Ubiquitin-conjugating enzyme E2 13 (ubc13) of Schizosaccharomyces pombe (strain 972 / ATCC 24843) (Fission yeast).